The sequence spans 226 residues: UPF0173 metal-dependent hydrolase CTN_1413 (226 aa).

Belongs to the UPF0173 family.

This Thermotoga neapolitana (strain ATCC 49049 / DSM 4359 / NBRC 107923 / NS-E) protein is UPF0173 metal-dependent hydrolase CTN_1413.